Here is a 322-residue protein sequence, read N- to C-terminus: Lignin-forming anionic peroxidase (322 aa).

The first 27 residues, 1–27, serve as a signal peptide directing secretion; that stretch reads MNTPTQSFRAKAAIFSLLLLSCMQCHA. Pyrrolidone carboxylic acid is present on Q28. 4 disulfide bridges follow: C38/C118, C71/C76, C124/C318, and C203/C229. Residue H69 is the Proton acceptor of the active site. Residues D70, V73, G75, D77, and S79 each coordinate Ca(2+). Residue P166 coordinates substrate. H196 serves as a coordination point for heme b. T197 serves as a coordination point for Ca(2+). N-linked (GlcNAc...) asparagine glycosylation is present at N213. The Ca(2+) site is built by D242, T245, and D250.

It belongs to the peroxidase family. Classical plant (class III) peroxidase subfamily. The cofactor is Ca(2+). Heme b serves as cofactor. In terms of tissue distribution, mesophyll protoplasts and to a much lesser extent, roots and germinating seeds.

The protein resides in the secreted. The catalysed reaction is 2 a phenolic donor + H2O2 = 2 a phenolic radical donor + 2 H2O. Functionally, removal of H(2)O(2), oxidation of toxic reductants, biosynthesis and degradation of lignin, suberization, auxin catabolism, response to environmental stresses such as wounding, pathogen attack and oxidative stress. These functions might be dependent on each isozyme/isoform in each plant tissue. Plays an integral role in secondary cell wall biosynthesis by the polymerization of cinnamyl alcohols into lignin and by forming rigid cross-links between cellulose, pectin, hydroxy-proline-rich glycoproteins, and lignin. In Nicotiana sylvestris (Wood tobacco), this protein is Lignin-forming anionic peroxidase.